The primary structure comprises 125 residues: MIRTLVHAKIHRATVTGADLNYVGSITIDEDLLEAAGIWPFERVQVVDVNNGARLETYAIVGERGSGTIQLNGAAAHLVNVGDLVIIMAYAQVDAKPEEWEPTVVFVNEQNAITEVKALLPVGGR.

Ser-25 serves as the catalytic Schiff-base intermediate with substrate; via pyruvic acid. The residue at position 25 (Ser-25) is a Pyruvic acid (Ser). Substrate is bound at residue Thr-57. Tyr-58 serves as the catalytic Proton donor. 73–75 (GAA) contributes to the substrate binding site.

It belongs to the PanD family. As to quaternary structure, heterooctamer of four alpha and four beta subunits. It depends on pyruvate as a cofactor. In terms of processing, is synthesized initially as an inactive proenzyme, which is activated by self-cleavage at a specific serine bond to produce a beta-subunit with a hydroxyl group at its C-terminus and an alpha-subunit with a pyruvoyl group at its N-terminus.

The protein localises to the cytoplasm. It catalyses the reaction L-aspartate + H(+) = beta-alanine + CO2. It participates in cofactor biosynthesis; (R)-pantothenate biosynthesis; beta-alanine from L-aspartate: step 1/1. Catalyzes the pyruvoyl-dependent decarboxylation of aspartate to produce beta-alanine. In Herpetosiphon aurantiacus (strain ATCC 23779 / DSM 785 / 114-95), this protein is Aspartate 1-decarboxylase.